The sequence spans 786 residues: von Willebrand factor A domain-containing protein 5A (786 aa).

One can recognise a VIT domain in the interval 1–131 (MVHFCGLLTL…KAAVTLKYVQ (131 aa)). Positions 281-462 (EFIFLMDRSG…KALRTLKRSL (182 aa)) constitute a VWFA domain.

Expressed at low level in many tissues. Not expressed in 80% of tumor cell lines tested.

May play a role in tumorigenesis as a tumor suppressor. Altered expression of this protein and disruption of the molecular pathway it is involved in, may contribute directly to or modify tumorigenesis. The polypeptide is von Willebrand factor A domain-containing protein 5A (VWA5A) (Homo sapiens (Human)).